The sequence spans 700 residues: Serine/threonine-protein kinase WNK1 (700 aa).

One can recognise a Protein kinase domain in the interval 24–281 (GRYNEVLGKG…ARELLDDPFL (258 aa)). ATP contacts are provided by residues 104–107 (TELF) and Lys154. The active-site Proton acceptor is Asp171. Residues 314 to 339 (NYPSNSSSLNRQYSNGNYPSNSSSLN) show a composition bias toward low complexity. 3 disordered regions span residues 314–345 (NYPS…YSNG), 551–575 (ESRE…EVLY), and 647–666 (ESGE…SVSG). Residues 551–565 (ESRELSSIDSGHNHS) are compositionally biased toward basic and acidic residues. The segment covering 566-575 (EEEEEEEVLY) has biased composition (acidic residues).

This sequence belongs to the protein kinase superfamily. Ser/Thr protein kinase family. WNK subfamily. Post-translationally, autophosphorylated.

It carries out the reaction L-seryl-[protein] + ATP = O-phospho-L-seryl-[protein] + ADP + H(+). The catalysed reaction is L-threonyl-[protein] + ATP = O-phospho-L-threonyl-[protein] + ADP + H(+). Functionally, regulates flowering time by modulating the photoperiod pathway. Phosphorylates APRR3. The chain is Serine/threonine-protein kinase WNK1 (WNK1) from Arabidopsis thaliana (Mouse-ear cress).